Reading from the N-terminus, the 371-residue chain is Aromatic peroxygenase (371 aa).

An N-terminal signal peptide occupies residues 1–18; the sequence is MKYFPLFPTLVFAARVVA. Residues 19-43 constitute a propeptide that is removed on maturation; that stretch reads FPAYASLAGLSQQELDAIIPTLEAR. N54 carries N-linked (GlcNAc...) asparagine glycosylation. Residue C79 participates in heme binding. N-linked (GlcNAc...) asparagine glycans are attached at residues N184, N204, N225, and N329. C321 and C362 are oxidised to a cystine.

This sequence belongs to the chloroperoxidase family. It depends on heme b as a cofactor. In terms of processing, N-glycosylated.

It carries out the reaction RH + H2O2 = ROH + H2O.. Its function is as follows. Aromatic peroxidase that oxidizes aryl alcohols into the corresponding aldehydes and then into the corresponding benzoic acids. Oxidizes toluene and naphthalene. Catalyzes the regioselective peroxide-dependent hydroxylation of propranolol and diclofenac to 5-hydroxypropranolol and 4'-hydroxydiclofenac. Catalyzes the regioselective peroxide-dependent hydroxylation of naphthalene to 1-naphthol or 2-naphthol via a naphthalene 1,2-oxide intermediate. Catalyzes the regioselective peroxide-dependent oxidation of pyridine to pyridine N-oxide. Halogenates monochlorodimedone and phenol. Oxidizes the sulfur-containing heterocycle dibenzothiophene to yield ring-hydroxylation products and to a lesser extent sulfoxidation products. The chain is Aromatic peroxygenase from Cyclocybe aegerita (Black poplar mushroom).